The sequence spans 142 residues: Large ribosomal subunit protein uL11 (142 aa).

This sequence belongs to the universal ribosomal protein uL11 family. Part of the ribosomal stalk of the 50S ribosomal subunit. Interacts with L10 and the large rRNA to form the base of the stalk. L10 forms an elongated spine to which L12 dimers bind in a sequential fashion forming a multimeric L10(L12)X complex. One or more lysine residues are methylated.

Forms part of the ribosomal stalk which helps the ribosome interact with GTP-bound translation factors. This is Large ribosomal subunit protein uL11 from Ruthia magnifica subsp. Calyptogena magnifica.